Reading from the N-terminus, the 322-residue chain is MKLRNVSKNNLNKEDTKLSIEQFGGNVEWFNITKTLSESLPYIQQFSGETFIIKYGGAAMTDKKLAESFAHDVVLLKQLGINPIVVHGGGNKINEFLEKINKKSTFINGLRITDAETLEIVEMVLCGLVNKNITQLINNAGGNAIGLCGKDANLIEAKKICYTYKENQSNNVEKILDMGFVGEPHDINTDLLFFMEESDFIPVIAPVCSGENNLTYNVNADLVAGALANAMAAAKLIILTNVSGVTDSNGNLISELSVSHAENLIDNGTAHTGMIPKLQTCVRVVKEGYGSAHIIDGRIPHVLLLELFTIHGTGTMVVNSGV.

Residues 89–90, Arg-111, and Asn-217 each bind substrate; that span reads GG.

Belongs to the acetylglutamate kinase family. ArgB subfamily.

Its subcellular location is the cytoplasm. It catalyses the reaction N-acetyl-L-glutamate + ATP = N-acetyl-L-glutamyl 5-phosphate + ADP. It participates in amino-acid biosynthesis; L-arginine biosynthesis; N(2)-acetyl-L-ornithine from L-glutamate: step 2/4. Its function is as follows. Catalyzes the ATP-dependent phosphorylation of N-acetyl-L-glutamate. The polypeptide is Acetylglutamate kinase (Ehrlichia ruminantium (strain Welgevonden)).